Reading from the N-terminus, the 183-residue chain is Inner membrane protein YgjV (183 aa).

Residues 1–2 are Periplasmic-facing; the sequence is MT. Residues 3–23 traverse the membrane as a helical segment; sequence AYWLAQGVGVIAFLIGITTFF. Residues 24–38 lie on the Cytoplasmic side of the membrane; the sequence is NRDERRFKKQLSVYS. The chain crosses the membrane as a helical span at residues 39–59; sequence AVIGVHFFLLGTYPAGASAIL. Residues 60–71 are Periplasmic-facing; sequence NAIRTLITLRTR. 2 consecutive transmembrane segments (helical) span residues 72 to 92 and 93 to 113; these read SLWVMAIFIVLTGGIGLAKFH and HPVELLPVIGTIVSTWALFCC. The Periplasmic portion of the chain corresponds to 114–133; it reads KGLTMRCVMWFSTCCWVIHN. Residues 134–154 form a helical membrane-spanning segment; sequence FWAGSIGGTMIEGSFLLMNGL. The Cytoplasmic segment spans residues 155–183; that stretch reads NIIRFWRMQKRGIDPFKVEKTPSAVDERG.

The protein localises to the cell inner membrane. The sequence is that of Inner membrane protein YgjV (ygjV) from Escherichia coli (strain K12).